Reading from the N-terminus, the 812-residue chain is Eukaryotic translation initiation factor 3 subunit C (812 aa).

Residues 1 to 105 (MSRFFSRGYH…SDESDDEGKK (105 aa)) form a disordered region. Acidic residues-rich tracts occupy residues 17–40 (SEDE…EVVS) and 48–59 (SESESAESDDDS). In terms of domain architecture, PCI spans 607–783 (FHQHINLDLI…EMLIFDKGDE (177 aa)).

It belongs to the eIF-3 subunit C family. Component of the eukaryotic translation initiation factor 3 (eIF-3) complex.

The protein resides in the cytoplasm. Its function is as follows. Component of the eukaryotic translation initiation factor 3 (eIF-3) complex, which is involved in protein synthesis of a specialized repertoire of mRNAs and, together with other initiation factors, stimulates binding of mRNA and methionyl-tRNAi to the 40S ribosome. The eIF-3 complex specifically targets and initiates translation of a subset of mRNAs involved in cell proliferation. This Eremothecium gossypii (strain ATCC 10895 / CBS 109.51 / FGSC 9923 / NRRL Y-1056) (Yeast) protein is Eukaryotic translation initiation factor 3 subunit C.